The chain runs to 545 residues: MVTIVLNKYKLLDKIHIGQQKLEDLLFNLKSEVKPIDENNIEIEINADRLDLLSSDGIARAIKGLLEKELGEAKYNVTDTEYTLIVDNVRTRPYALAAIVYNAKIDLEELIQFQEKLHGTIGRKRKKVAIGIHDLRKVDSKTIEYKEVPLSYKFVPLYGNKELTISEILEKTEQGKLYGNISIANGVSPAIVQDDGEVLSIPPIINSNKTRLDENTKDFFIDVTGTSFEAVAQTLDIIVSNLAEAGGTIGRVKVLKSANSSQLSSPLFLHKIQNVREEYVKKILGIKTSKEEICKHVMRMRMNCDIENGVIRVTVPQYRVDILNEIDVVEDIAMSIGYNNLEPSKYISTNYGSYDYMTLLERKIRELGIGAGYVEISNFVLIKDEKLFSNKYVKILNPVTEEYNAVRDSLIPGLLDFLSKNQHAKFPIRVFETGDVVVYDSSTDTGFRNDKRAAYAIMDNKVSYEDIQAPIHYILKSLGLEVNYKEENNNIFIEGRSASIFYENEKMGVIGEVNPDVLIRFGIEYPAVIAELYISEIGKRLTNQR.

The 76-residue stretch at 268-343 folds into the B5 domain; the sequence is FLHKIQNVRE…MSIGYNNLEP (76 aa). The Mg(2+) site is built by D321, D327, E330, and D331.

It belongs to the phenylalanyl-tRNA synthetase beta subunit family. Type 2 subfamily. Tetramer of two alpha and two beta subunits. Requires Mg(2+) as cofactor.

It localises to the cytoplasm. It carries out the reaction tRNA(Phe) + L-phenylalanine + ATP = L-phenylalanyl-tRNA(Phe) + AMP + diphosphate + H(+). This chain is Phenylalanine--tRNA ligase beta subunit, found in Saccharolobus islandicus (strain Y.N.15.51 / Yellowstone #2) (Sulfolobus islandicus).